An 85-amino-acid chain; its full sequence is Phosphocarrier protein HPr (85 aa).

The 85-residue stretch at 1-85 (MFQNQVKITA…HLSLIMTELE (85 aa)) folds into the HPr domain. The active-site Pros-phosphohistidine intermediate is H15.

It belongs to the HPr family.

The protein localises to the cytoplasm. Functionally, general (non sugar-specific) component of the phosphoenolpyruvate-dependent sugar phosphotransferase system (sugar PTS). This major carbohydrate active-transport system catalyzes the phosphorylation of incoming sugar substrates concomitantly with their translocation across the cell membrane. The phosphoryl group from phosphoenolpyruvate (PEP) is transferred to the phosphoryl carrier protein HPr by enzyme I. Phospho-HPr then transfers it to the PTS EIIA domain. The polypeptide is Phosphocarrier protein HPr (ptsH) (Buchnera aphidicola subsp. Acyrthosiphon pisum (strain APS) (Acyrthosiphon pisum symbiotic bacterium)).